Here is a 117-residue protein sequence, read N- to C-terminus: Large ribosomal subunit protein bL19 (117 aa).

The protein belongs to the bacterial ribosomal protein bL19 family.

Its function is as follows. This protein is located at the 30S-50S ribosomal subunit interface and may play a role in the structure and function of the aminoacyl-tRNA binding site. The polypeptide is Large ribosomal subunit protein bL19 (Blochmanniella floridana).